A 211-amino-acid polypeptide reads, in one-letter code: Superoxide dismutase [Mn] (211 aa).

Mn(2+) is bound by residues His27, His82, Asp165, and His169.

This sequence belongs to the iron/manganese superoxide dismutase family. Homodimer. Mn(2+) serves as cofactor.

It catalyses the reaction 2 superoxide + 2 H(+) = H2O2 + O2. Destroys superoxide anion radicals which are normally produced within the cells and which are toxic to biological systems. The sequence is that of Superoxide dismutase [Mn] (sodA) from Bordetella pertussis (strain Tohama I / ATCC BAA-589 / NCTC 13251).